Here is a 470-residue protein sequence, read N- to C-terminus: Tert-butanol monooxygenase / tert-amyl alcohol desaturase oxygenase subunit (470 aa).

One can recognise a Rieske domain in the interval 51–155 (WQPVCLSQEL…AFERNGLVFA (105 aa)). C91, H93, C110, and H113 together coordinate [2Fe-2S] cluster.

It belongs to the bacterial ring-hydroxylating dioxygenase alpha subunit family. As to quaternary structure, this two-component enzyme is composed of an oxygenase (MdpJ) and a reductase (MdpK). It depends on [2Fe-2S] cluster as a cofactor.

It carries out the reaction tert-butanol + NADPH + O2 + H(+) = 2-methylpropane-1,2-diol + NADP(+) + H2O. The enzyme catalyses 2-methylbutan-2-ol + NADPH + O2 + H(+) = 3-hydroxy-3-methylbut-1-ene + NADP(+) + 2 H2O. In terms of biological role, oxygenase component of a two-component system involved in the degradation of tertiary alcohols such as tert-butyl alcohol (TBA) and tert-amyl alcohol (TAA). In the presence of TBA, catalyzes the hydroxylation of TBA to 2-methylpropane-1,2-diol. In the presence of TAA, functions as a desaturase, enabling the degradation of TAA and resulting in the formation of the hemiterpene 3-hydroxy-3-methylbut-1-ene. The specificity of the catalysis depends strongly on the molecule structure of the substrate, allowing either hydroxylation or desaturation reactions. Also catalyzes the desaturation of the tertiary alcohol 3-methyl-3-pentanol (a C6 homolog of TBA and TAA) to 3-methyl-1-penten-3-ol, with lower efficiency. In addition, can transform some secondary alcohols, including the hydroxylation of 2-propanol to 1,2-propanediol, and the desaturation of 2-butanol, 3-methyl-2-butanol and 3-pentanol. The sequence is that of Tert-butanol monooxygenase / tert-amyl alcohol desaturase oxygenase subunit from Aquincola tertiaricarbonis.